We begin with the raw amino-acid sequence, 234 residues long: Phosphoribosylaminoimidazole-succinocarboxamide synthase (234 aa).

Belongs to the SAICAR synthetase family.

It carries out the reaction 5-amino-1-(5-phospho-D-ribosyl)imidazole-4-carboxylate + L-aspartate + ATP = (2S)-2-[5-amino-1-(5-phospho-beta-D-ribosyl)imidazole-4-carboxamido]succinate + ADP + phosphate + 2 H(+). It participates in purine metabolism; IMP biosynthesis via de novo pathway; 5-amino-1-(5-phospho-D-ribosyl)imidazole-4-carboxamide from 5-amino-1-(5-phospho-D-ribosyl)imidazole-4-carboxylate: step 1/2. The sequence is that of Phosphoribosylaminoimidazole-succinocarboxamide synthase from Streptococcus pyogenes serotype M3 (strain ATCC BAA-595 / MGAS315).